Reading from the N-terminus, the 695-residue chain is Spermidine/spermine N(1)-acetyltransferase-like protein 1 (695 aa).

3 stretches are compositionally biased toward polar residues: residues 1–39 (MNQS…QGSA), 52–68 (PSMS…NLPD), and 78–98 (DTWQ…SQLV). Disordered stretches follow at residues 1 to 274 (MNQS…MNQM), 290 to 332 (DMKQ…PGMW), 344 to 375 (ASIS…NQSG), and 387 to 493 (RQSG…GLSQ). Positions 105–122 (SQPDPSQPGPSQSGPSQS) are enriched in low complexity. Composition is skewed to polar residues over residues 123 to 179 (RMRQ…TGLS), 197 to 208 (GVQQPGISQQVP), 231 to 266 (PDTS…QPSP), 294 to 310 (PSMS…NLPD), 355 to 375 (APSQ…NQSG), 389 to 422 (SGGS…TGLS), and 459 to 471 (PGTS…QTGM). The N-acetyltransferase domain occupies 529–695 (FQIRHAEAGD…EELLDMAWEE (167 aa)). Residue 552–553 (CE) coordinates substrate. Acetyl-CoA contacts are provided by residues 618–620 (FYV) and 626–631 (GLGIGA). Substrate is bound by residues 650–652 (HFL) and Glu676.

Belongs to the acetyltransferase family.

The polypeptide is Spermidine/spermine N(1)-acetyltransferase-like protein 1 (SATL1) (Homo sapiens (Human)).